Reading from the N-terminus, the 275-residue chain is Polyamine aminopropyltransferase (275 aa).

In terms of domain architecture, PABS spans 2 to 235; the sequence is DLWLREGQIE…GFWSFTIGSK (234 aa). Gln31 is a binding site for S-methyl-5'-thioadenosine. Spermidine contacts are provided by His62 and Asp86. Residues Glu106 and 137-138 each bind S-methyl-5'-thioadenosine; that span reads DG. Asp155 serves as the catalytic Proton acceptor. 155 to 158 lines the spermidine pocket; that stretch reads DSTD.

Belongs to the spermidine/spermine synthase family. In terms of assembly, homodimer or homotetramer.

It localises to the cytoplasm. It carries out the reaction S-adenosyl 3-(methylsulfanyl)propylamine + putrescine = S-methyl-5'-thioadenosine + spermidine + H(+). Its pathway is amine and polyamine biosynthesis; spermidine biosynthesis; spermidine from putrescine: step 1/1. Its function is as follows. Catalyzes the irreversible transfer of a propylamine group from the amino donor S-adenosylmethioninamine (decarboxy-AdoMet) to putrescine (1,4-diaminobutane) to yield spermidine. This chain is Polyamine aminopropyltransferase, found in Clostridium kluyveri (strain NBRC 12016).